The primary structure comprises 383 residues: Putative protein FAM157A (383 aa).

Disordered regions lie at residues 1–21 and 177–254; these read MGPL…PLPK and ATAR…PLGR.

Belongs to the FAM157 family.

The polypeptide is Putative protein FAM157A (FAM157A) (Homo sapiens (Human)).